Here is a 552-residue protein sequence, read N- to C-terminus: 5'-AMP-activated protein kinase catalytic subunit alpha-2 (552 aa).

Residues tyrosine 16–phenylalanine 268 enclose the Protein kinase domain. Residues leucine 22–valine 30 and lysine 45 each bind ATP. Aspartate 139 functions as the Proton acceptor in the catalytic mechanism. At threonine 172 the chain carries Phosphothreonine; by LKB1 and CaMKK2. Position 258 is a phosphothreonine (threonine 258). Residues glutamate 291 to aspartate 376 are AIS. Residue serine 377 is modified to Phosphoserine. The interval glutamate 478 to serine 519 is disordered. The segment covering arginine 480–cysteine 490 has biased composition (polar residues). Serine 491 carries the phosphoserine modification. Residues serine 509 to serine 519 show a composition bias toward low complexity.

The protein belongs to the protein kinase superfamily. CAMK Ser/Thr protein kinase family. SNF1 subfamily. In terms of assembly, AMPK is a heterotrimer of an alpha catalytic subunit (PRKAA1 or PRKAA2), a beta (PRKAB1 or PRKAB2) and a gamma non-catalytic subunits (PRKAG1, PRKAG2 or PRKAG3). Interacts with FNIP1 and FNIP2. Interacts with DUSP29. Interacts with ARF6. The phosphorylated form at Thr-172 mediated by CamKK2 interacts with ACSS2. Mg(2+) is required as a cofactor. Ubiquitinated. Post-translationally, phosphorylated at Thr-172 by STK11/LKB1 in complex with STE20-related adapter-alpha (STRADA) pseudo kinase and CAB39. Also phosphorylated at Thr-172 by CAMKK2; triggered by a rise in intracellular calcium ions, without detectable changes in the AMP/ATP ratio. CAMKK1 can also phosphorylate Thr-172, but at much lower level. Dephosphorylated by protein phosphatase 2A and 2C (PP2A and PP2C). Phosphorylated by ULK1; leading to negatively regulate AMPK activity and suggesting the existence of a regulatory feedback loop between ULK1 and AMPK. Dephosphorylated by PPM1A and PPM1B at Thr-172 (mediated by STK11/LKB1).

The protein resides in the cytoplasm. The protein localises to the nucleus. It carries out the reaction L-seryl-[protein] + ATP = O-phospho-L-seryl-[protein] + ADP + H(+). It catalyses the reaction L-threonyl-[protein] + ATP = O-phospho-L-threonyl-[protein] + ADP + H(+). The enzyme catalyses L-seryl-[acetyl-CoA carboxylase] + ATP = O-phospho-L-seryl-[acetyl-CoA carboxylase] + ADP + H(+). The catalysed reaction is L-seryl-[3-hydroxy-3-methylglutaryl-coenzyme A reductase] + ATP = O-phospho-L-seryl-[3-hydroxy-3-methylglutaryl-coenzyme A reductase] + ADP + H(+). Its activity is regulated as follows. Activated by phosphorylation on Thr-172. Binding of AMP to non-catalytic gamma subunit (PRKAG1, PRKAG2 or PRKAG3) results in allosteric activation, inducing phosphorylation on Thr-172. AMP-binding to gamma subunit also sustains activity by preventing dephosphorylation of Thr-172. ADP also stimulates Thr-172 phosphorylation, without stimulating already phosphorylated AMPK. ATP promotes dephosphorylation of Thr-172, rendering the enzyme inactive. Under physiological conditions AMPK mainly exists in its inactive form in complex with ATP, which is much more abundant than AMP. Selectively inhibited by compound C (6-[4-(2-Piperidin-1-yl-ethoxy)-phenyl)]-3-pyridin-4-yl-pyyrazolo[1,5-a] pyrimidine. Activated by resveratrol, a natural polyphenol present in red wine, and S17834, a synthetic polyphenol. Salicylate/aspirin directly activates kinase activity, primarily by inhibiting Thr-172 dephosphorylation. Catalytic subunit of AMP-activated protein kinase (AMPK), an energy sensor protein kinase that plays a key role in regulating cellular energy metabolism. In response to reduction of intracellular ATP levels, AMPK activates energy-producing pathways and inhibits energy-consuming processes: inhibits protein, carbohydrate and lipid biosynthesis, as well as cell growth and proliferation. AMPK acts via direct phosphorylation of metabolic enzymes, and by longer-term effects via phosphorylation of transcription regulators. Regulates lipid synthesis by phosphorylating and inactivating lipid metabolic enzymes such as ACACA, ACACB, GYS1, HMGCR and LIPE; regulates fatty acid and cholesterol synthesis by phosphorylating acetyl-CoA carboxylase (ACACA and ACACB) and hormone-sensitive lipase (LIPE) enzymes, respectively. Promotes lipolysis of lipid droplets by mediating phosphorylation of isoform 1 of CHKA (CHKalpha2). Regulates insulin-signaling and glycolysis by phosphorylating IRS1, PFKFB2 and PFKFB3. Involved in insulin receptor/INSR internalization. AMPK stimulates glucose uptake in muscle by increasing the translocation of the glucose transporter SLC2A4/GLUT4 to the plasma membrane, possibly by mediating phosphorylation of TBC1D4/AS160. Regulates transcription and chromatin structure by phosphorylating transcription regulators involved in energy metabolism such as CRTC2/TORC2, FOXO3, histone H2B, HDAC5, MEF2C, MLXIPL/ChREBP, EP300, HNF4A, p53/TP53, SREBF1, SREBF2 and PPARGC1A. Acts as a key regulator of glucose homeostasis in liver by phosphorylating CRTC2/TORC2, leading to CRTC2/TORC2 sequestration in the cytoplasm. In response to stress, phosphorylates 'Ser-36' of histone H2B (H2BS36ph), leading to promote transcription. Acts as a key regulator of cell growth and proliferation by phosphorylating FNIP1, TSC2, RPTOR, WDR24 and ATG1/ULK1: in response to nutrient limitation, negatively regulates the mTORC1 complex by phosphorylating RPTOR component of the mTORC1 complex and by phosphorylating and activating TSC2. Also phosphorylates and inhibits GATOR2 subunit WDR24 in response to nutrient limitation, leading to suppress glucose-mediated mTORC1 activation. In response to energetic stress, phosphorylates FNIP1, inactivating the non-canonical mTORC1 signaling, thereby promoting nuclear translocation of TFEB and TFE3, and inducing transcription of lysosomal or autophagy genes. In response to nutrient limitation, promotes autophagy by phosphorylating and activating ATG1/ULK1. In that process also activates WDR45/WIPI4. Phosphorylates CASP6, thereby preventing its autoprocessing and subsequent activation. AMPK also acts as a regulator of circadian rhythm by mediating phosphorylation of CRY1, leading to destabilize it. May regulate the Wnt signaling pathway by phosphorylating CTNNB1, leading to stabilize it. Also acts as a regulator of cellular polarity by remodeling the actin cytoskeleton; probably by indirectly activating myosin. Also phosphorylates CFTR, EEF2K, KLC1, NOS3 and SLC12A1. Plays an important role in the differential regulation of pro-autophagy (composed of PIK3C3, BECN1, PIK3R4 and UVRAG or ATG14) and non-autophagy (composed of PIK3C3, BECN1 and PIK3R4) complexes, in response to glucose starvation. Can inhibit the non-autophagy complex by phosphorylating PIK3C3 and can activate the pro-autophagy complex by phosphorylating BECN1. Upon glucose starvation, promotes ARF6 activation in a kinase-independent manner leading to cell migration. Upon glucose deprivation mediates the phosphorylation of ACSS2 at 'Ser-659', which exposes the nuclear localization signal of ACSS2, required for its interaction with KPNA1 and nuclear translocation. Upon stress, regulates mitochondrial fragmentation through phosphorylation of MTFR1L. The chain is 5'-AMP-activated protein kinase catalytic subunit alpha-2 (PRKAA2) from Sus scrofa (Pig).